A 346-amino-acid chain; its full sequence is L-threonine dehydratase catabolic TdcB (346 aa).

59–60 (FT) contacts AMP. K64 bears the N6-(pyridoxal phosphate)lysine mark. Residues Q94, 125 to 126 (GY), and N321 each bind AMP.

This sequence belongs to the serine/threonine dehydratase family. In the native structure, TdcB is in a dimeric form, whereas in the TdcB-AMP complex, it exists in a tetrameric form (dimer of dimers). Requires pyridoxal 5'-phosphate as cofactor.

It catalyses the reaction L-threonine = 2-oxobutanoate + NH4(+). It participates in amino-acid degradation; L-threonine degradation via propanoate pathway; propanoate from L-threonine: step 1/4. Each protein molecule can bind up to four molecules of AMP, which act as an allosteric activator to the enzyme. Its function is as follows. Catalyzes the anaerobic formation of alpha-ketobutyrate and ammonia from threonine in a two-step reaction. The first step involved a dehydration of threonine and a production of enamine intermediates (aminocrotonate), which tautomerizes to its imine form (iminobutyrate). Both intermediates are unstable and short-lived. The second step is the nonenzymatic hydrolysis of the enamine/imine intermediates to form 2-ketobutyrate and free ammonia. In the low water environment of the cell, the second step is accelerated by RidA. The sequence is that of L-threonine dehydratase catabolic TdcB (tdcB) from Staphylococcus aureus (strain bovine RF122 / ET3-1).